The primary structure comprises 629 residues: Solute carrier family 22 member 14 (629 aa).

Residues 1–21 form a disordered region; that stretch reads MKEDQNYKTAFGSQNSRDTHR. The Cytoplasmic segment spans residues 1-67; the sequence is MKEDQNYKTA…IGEFGTFQWR (67 aa). Residues 7–16 show a composition bias toward polar residues; sequence YKTAFGSQNS. The chain crosses the membrane as a helical span at residues 68–88; that stretch reads LVVLTFIPSILSTFFIFSHHF. The Extracellular segment spans residues 89-183; sequence LLTAQRPYCN…LVCGNEPNKE (95 aa). Residues Asn-98, Asn-116, Asn-124, and Asn-149 are each glycosylated (N-linked (GlcNAc...) asparagine). Residues 184-204 form a helical membrane-spanning segment; the sequence is NGLTVFLSGVLTGSLLFGFLS. The Cytoplasmic portion of the chain corresponds to 205–209; that stretch reads DKLGR. The helical transmembrane segment at 210–230 threads the bilayer; the sequence is YPIILLSLLGFLIFGFGTAFV. Residues 231–240 lie on the Extracellular side of the membrane; the sequence is SSFYQYLFFR. Residues 241–261 traverse the membrane as a helical segment; sequence FFVAQASVGYAICSVSLVMEW. The Cytoplasmic segment spans residues 262–269; the sequence is LVGEHRAQ. Residues 270–290 form a helical membrane-spanning segment; the sequence is AVILQHSFLTIGVILLTGLAY. Over 291–295 the chain is Extracellular; that stretch reads KVVHW. Residues 296–316 traverse the membrane as a helical segment; that stretch reads RLLCLLGGMPMFPLICNIWVL. Topologically, residues 317 to 378 are cytoplasmic; that stretch reads RESPRWLMVR…DFCTNQHLFK (62 aa). A helical membrane pass occupies residues 379-399; that stretch reads VVLAIGCVWFTVSYISFTLNL. At 400–409 the chain is on the extracellular side; the sequence is KMNDFGLDVY. The helical transmembrane segment at 410 to 430 threads the bilayer; it reads FVQMVRSIVAVPARLCCIILL. Topologically, residues 431–436 are cytoplasmic; that stretch reads EYFGRK. A helical membrane pass occupies residues 437 to 457; that stretch reads WALNLTLFLVTSMCLFLLFLP. Residues 458–463 lie on the Extracellular side of the membrane; sequence QEPKST. Residues 464 to 484 form a helical membrane-spanning segment; it reads IILTLMLAEFSMAGTLSIFFI. The Cytoplasmic portion of the chain corresponds to 485-496; that stretch reads YTAELLPTVLRS. The chain crosses the membrane as a helical span at residues 497–517; it reads TGLGMVSLAWVAGAISSVAIF. The Extracellular portion of the chain corresponds to 518 to 523; it reads KQTKTQ. The chain crosses the membrane as a helical span at residues 524 to 544; that stretch reads LPIFFCCLCCVLALCFSSLVP. Residues 545–629 lie on the Cytoplasmic side of the membrane; the sequence is ETGSQSLRDS…PVQSLKAQPP (85 aa).

The protein belongs to the major facilitator (TC 2.A.1) superfamily. Organic cation transporter (TC 2.A.1.19) family. In terms of tissue distribution, testis-specific (at protein level). Specifically expressed in male germ cells (at protein level).

It is found in the mitochondrion inner membrane. The protein localises to the cell projection. It localises to the cilium. The protein resides in the flagellum membrane. The enzyme catalyses riboflavin(in) = riboflavin(out). In terms of biological role, riboflavin transporter localized at the inner mitochondrial membrane of the spermatozoa midpiece, which is required for male fertility. SLC22A14-mediated riboflavin transport is essential for spermatozoa energy generation and motility: riboflavin is the precursor of FMN and FAD, which are coenzymes of many enzymes in the TCA cycle (the citric acid cycle) in mitochondria. Required for sperm motility and normal sperm flagellar structure. This Mus musculus (Mouse) protein is Solute carrier family 22 member 14.